Here is a 374-residue protein sequence, read N- to C-terminus: Cell division protein DivIB (374 aa).

Residues 1–90 (MWKISNENDI…EEEHFADRLP (90 aa)) are disordered. Residues 1–103 (MWKISNENDI…KTRNKRLYRR (103 aa)) are Cytoplasmic-facing. Positions 39–53 (YLKKQAEEAASKGEN) are enriched in basic and acidic residues. The span at 56 to 75 (AEVTITLQEQSQEEPQQHLP) shows a compositional bias: polar residues. Residues 104–124 (LAFILTCLGTAILVALYFVSP) traverse the membrane as a helical segment. The Extracellular portion of the chain corresponds to 125–374 (LSRLSEVTVS…GENQEVQQAE (250 aa)). The 72-residue stretch at 126–197 (SRLSEVTVSG…NSFKIDIQEY (72 aa)) folds into the POTRA domain. The tract at residues 325–374 (KESEETGSEVSEDSAVENQEVVDPNAGVATDGANNGTPTNGENQEVQQAE) is disordered. Positions 326–339 (ESEETGSEVSEDSA) are enriched in acidic residues. Over residues 356–374 (GANNGTPTNGENQEVQQAE) the composition is skewed to polar residues.

It belongs to the FtsQ/DivIB family. DivIB subfamily.

It is found in the cell membrane. In terms of biological role, cell division protein that may be involved in stabilizing or promoting the assembly of the division complex. This is Cell division protein DivIB from Enterococcus faecalis (strain 62).